We begin with the raw amino-acid sequence, 523 residues long: Sialate O-acetylesterase (523 aa).

An N-terminal signal peptide occupies residues Met-1 to Gly-23. Residues Asn-107, Asn-138, Asn-267, Asn-290, Asn-401, and Asn-422 are each glycosylated (N-linked (GlcNAc...) asparagine).

In terms of tissue distribution, widely expressed with high expression in the testis, prostate, and colon.

The protein resides in the lysosome. It localises to the cytoplasm. It carries out the reaction N-acetyl-9-O-acetylneuraminate + H2O = N-acetylneuraminate + acetate + H(+). The catalysed reaction is an Ac-O-9-sialoglycoconjugate + H2O = a sialoglycoconjugate + acetate + H(+). Its function is as follows. Catalyzes the removal of O-acetyl ester groups from position 9 of the free diacetylated sialate N-acetyl-9-O-acetylneuraminate (Neu5,9Ac2) in the cytosol and of the diacetylated sialate residues of sialylglycoconjugates in the lysosomes. Together with the sialate-O-acetyltransferase they regulate the balance of acetylated sialoglycoconjugates, key players in various processes such as cell-cell interactions, host-pathogen recognition, and tumor antigenicity. The protein is Sialate O-acetylesterase (SIAE) of Homo sapiens (Human).